A 444-amino-acid chain; its full sequence is Pineal opsin (444 aa).

Residues 1–20 are disordered; it reads MDALQESPPSHHSLPSALPS. At 1–46 the chain is on the extracellular side; sequence MDALQESPPSHHSLPSALPSATGGNGTVATMHNPFERPLEGIAPWN. Residues 7–20 show a composition bias toward low complexity; the sequence is SPPSHHSLPSALPS. Asparagine 25 carries an N-linked (GlcNAc...) asparagine glycan. A helical transmembrane segment spans residues 47–71; sequence FTMLAALMGTITALSLGENFAVIVV. At 72–83 the chain is on the cytoplasmic side; it reads TARFRQLRQPLN. The helical transmembrane segment at 84 to 108 threads the bilayer; sequence YVLVNLAAADLLVSAIGGSVSFFTN. Over 109-123 the chain is Extracellular; it reads IKGYFFLGVHACVLE. Cysteine 120 and cysteine 197 form a disulfide bridge. Residues 124–143 traverse the membrane as a helical segment; that stretch reads GFAVTYFGVVALWSLALLAF. Topologically, residues 144–162 are cytoplasmic; it reads ERYFVICRPLGNFRLQSKH. The chain crosses the membrane as a helical span at residues 163–186; the sequence is AVLGLAVVWVFSLACTLPPVLGWS. At 187 to 210 the chain is on the extracellular side; that stretch reads SYRPSMIGTTCEPNWYSGELHDHT. The helical transmembrane segment at 211 to 238 threads the bilayer; the sequence is FILMFFSTCFIFPLAVIFFSYGKLIQKL. Topologically, residues 239–260 are cytoplasmic; the sequence is KKASETQRGLESTRRAEQQVTR. The helical transmembrane segment at 261-284 threads the bilayer; the sequence is MVVVMILAFLVCWMPYATFSIVVT. The Extracellular segment spans residues 285–292; that stretch reads ACPTIHLD. Residues 293–317 traverse the membrane as a helical segment; that stretch reads PLLAAVPAFFSKTATVYNPVIYIFM. Residue lysine 304 is modified to N6-(retinylidene)lysine. At 318-444 the chain is on the cytoplasmic side; that stretch reads NKQFRDCFVQ…SESVSKICPV (127 aa). A lipid anchor (S-palmitoyl cysteine) is attached at cysteine 331. 2 disordered regions span residues 341–360 and 388–420; these read QTAG…QSPG and EPTM…QQGT. Low complexity predominate over residues 409-419; it reads QQQGQQQQQQG.

The protein belongs to the G-protein coupled receptor 1 family. Opsin subfamily. Post-translationally, phosphorylated on some or all of the serine and threonine residues present in the C-terminal region. In terms of tissue distribution, pineal gland.

It localises to the membrane. This is Pineal opsin from Petromyzon marinus (Sea lamprey).